The chain runs to 152 residues: Ribonuclease pancreatic beta-type (152 aa).

The N-terminal stretch at 1 to 25 is a signal peptide; that stretch reads MGLXKSFALFSLLVLVLGWVQPSLS. Residues 25 to 53 are disordered; the sequence is SGESRESSADKFKRQHMDPDSPSKSSPTY. Residues 27–45 show a composition bias toward basic and acidic residues; it reads ESRESSADKFKRQHMDPDS. 2 residues coordinate substrate: Lys35 and Arg38. The active-site Proton acceptor is His40. 4 disulfides stabilise this stretch: Cys54/Cys112, Cys68/Cys123, Cys86/Cys138, and Cys93/Cys100. Residues 69-73 and Lys94 each bind substrate; that span reads KRVNT. The active-site Proton donor is the His147.

Belongs to the pancreatic ribonuclease family. Monomer.

It localises to the secreted. It carries out the reaction an [RNA] containing cytidine + H2O = an [RNA]-3'-cytidine-3'-phosphate + a 5'-hydroxy-ribonucleotide-3'-[RNA].. The catalysed reaction is an [RNA] containing uridine + H2O = an [RNA]-3'-uridine-3'-phosphate + a 5'-hydroxy-ribonucleotide-3'-[RNA].. Endonuclease that catalyzes the cleavage of RNA on the 3' side of pyrimidine nucleotides. Acts on single-stranded and double-stranded RNA. This Rattus tiomanicus (Malayan field rat) protein is Ribonuclease pancreatic beta-type.